Consider the following 176-residue polypeptide: Small ribosomal subunit protein uS5 (176 aa).

The 64-residue stretch at 11–74 (LSEVLVDVNR…QAAKKRMMKV (64 aa)) folds into the S5 DRBM domain.

The protein belongs to the universal ribosomal protein uS5 family. Part of the 30S ribosomal subunit. Contacts proteins S4 and S8.

In terms of biological role, with S4 and S12 plays an important role in translational accuracy. Its function is as follows. Located at the back of the 30S subunit body where it stabilizes the conformation of the head with respect to the body. The protein is Small ribosomal subunit protein uS5 of Rickettsia peacockii (strain Rustic).